A 113-amino-acid chain; its full sequence is uncharacterized protein (113 aa).

Positions Ser31–Tyr113 are disordered. The segment covering Asn32–Asn98 has biased composition (low complexity). A compositionally biased stretch (polar residues) spans Ser99–Tyr113.

This is an uncharacterized protein from Dictyostelium discoideum (Social amoeba).